A 146-amino-acid chain; its full sequence is 3-hydroxyacyl-[acyl-carrier-protein] dehydratase FabZ (146 aa).

The active site involves His49.

Belongs to the thioester dehydratase family. FabZ subfamily.

It localises to the cytoplasm. It carries out the reaction a (3R)-hydroxyacyl-[ACP] = a (2E)-enoyl-[ACP] + H2O. In terms of biological role, involved in unsaturated fatty acids biosynthesis. Catalyzes the dehydration of short chain beta-hydroxyacyl-ACPs and long chain saturated and unsaturated beta-hydroxyacyl-ACPs. The polypeptide is 3-hydroxyacyl-[acyl-carrier-protein] dehydratase FabZ (Wolbachia sp. subsp. Brugia malayi (strain TRS)).